We begin with the raw amino-acid sequence, 442 residues long: 4-hydroxyphenylpyruvate dioxygenase (442 aa).

VOC domains follow at residues 45 to 200 (RFHH…GFEA) and 216 to 376 (RLDH…IFTK). Residues His-219, His-301, and Glu-387 each coordinate Fe cation.

The protein belongs to the 4HPPD family. Fe cation is required as a cofactor.

It is found in the cytoplasm. The enzyme catalyses 3-(4-hydroxyphenyl)pyruvate + O2 = homogentisate + CO2. The protein operates within amino-acid degradation; L-phenylalanine degradation; acetoacetate and fumarate from L-phenylalanine: step 3/6. Its pathway is cofactor biosynthesis; prenylquinone biosynthesis. This Daucus carota (Wild carrot) protein is 4-hydroxyphenylpyruvate dioxygenase.